The chain runs to 175 residues: Ribosome maturation factor RimM (175 aa).

In terms of domain architecture, PRC barrel spans 98 to 172; that stretch reads DGEFHVRDLQ…WLLITPPKGL (75 aa).

Belongs to the RimM family. In terms of assembly, binds ribosomal protein uS19.

It is found in the cytoplasm. In terms of biological role, an accessory protein needed during the final step in the assembly of 30S ribosomal subunit, possibly for assembly of the head region. Essential for efficient processing of 16S rRNA. May be needed both before and after RbfA during the maturation of 16S rRNA. It has affinity for free ribosomal 30S subunits but not for 70S ribosomes. This is Ribosome maturation factor RimM from Synechococcus sp. (strain RCC307).